The chain runs to 319 residues: MQDQRNLLVFSGNANKPLAQSICKELGVRMGKALVTRFSDGEVQVEIEESVRRQEVFVIQPTCAPSAENLMELLVLIDALKRASAQSVTAVIPYFGYSRQDRRMRSSRVPITAKVAAKMICAMEADRVLTVDLHADQIQGFFDVPVDNVYASPLLLADIWRAYGTDNLIVVSPDVGGVVRARAVAKRLDDADLAIIDKRRPRANVATVMNIIGDVQGKTCVLVDDLVDTAGTLCAAAAALKQRGALKVVAYITHPVLSGPAVDNINNSQLDELVVTDTIPLSEAARTCAKIRQLSVAELLAETIRRIAFGESVSSLYVD.

Residues 40-42 and 99-100 each bind ATP; these read DGE and RQ. Mg(2+) contacts are provided by His134 and Asp174. Residue Lys198 is part of the active site. D-ribose 5-phosphate-binding positions include Arg200, Asp224, and 228-232; that span reads DTAGT.

Belongs to the ribose-phosphate pyrophosphokinase family. Class I subfamily. As to quaternary structure, homohexamer. Requires Mg(2+) as cofactor.

The protein resides in the cytoplasm. The catalysed reaction is D-ribose 5-phosphate + ATP = 5-phospho-alpha-D-ribose 1-diphosphate + AMP + H(+). It participates in metabolic intermediate biosynthesis; 5-phospho-alpha-D-ribose 1-diphosphate biosynthesis; 5-phospho-alpha-D-ribose 1-diphosphate from D-ribose 5-phosphate (route I): step 1/1. Functionally, involved in the biosynthesis of the central metabolite phospho-alpha-D-ribosyl-1-pyrophosphate (PRPP) via the transfer of pyrophosphoryl group from ATP to 1-hydroxyl of ribose-5-phosphate (Rib-5-P). The polypeptide is Ribose-phosphate pyrophosphokinase (Xanthomonas axonopodis pv. citri (strain 306)).